A 620-amino-acid chain; its full sequence is Probable serine/threonine-protein kinase RTK1 (620 aa).

5 disordered regions span residues 1–20, 29–130, 153–186, 210–237, and 252–271; these read MVKE…SLFR, AKIF…PVRT, KDAF…SNLS, QAST…KKKS, and HDNH…TKPK. Positions 7 to 18 are enriched in low complexity; it reads LHSSSSTSLSSL. Over residues 56–76 the composition is skewed to basic and acidic residues; the sequence is KNTDSDQEDQIKYNKPNDRRS. Position 58 is a phosphothreonine (Thr-58). Ser-60 is modified (phosphoserine). Composition is skewed to polar residues over residues 95 to 107, 165 to 186, and 210 to 222; these read VASS…SPTS, TAHS…SNLS, and QAST…LQHN. Residue Ser-216 is modified to Phosphoserine. Over residues 254 to 263 the composition is skewed to basic residues; the sequence is NHHHHHHHNR. One can recognise a Protein kinase domain in the interval 302–575; that stretch reads GIPGRKLGEG…MNDVVKDDWL (274 aa). Residues 308–316 and Lys-330 each bind ATP; that span reads LGEGASGSV. Lys-334 participates in a covalent cross-link: Glycyl lysine isopeptide (Lys-Gly) (interchain with G-Cter in ubiquitin). Asp-430 acts as the Proton acceptor in catalysis.

The protein belongs to the protein kinase superfamily. Ser/Thr protein kinase family. As to quaternary structure, interacts with ribosome biogenesis factors ARC1, CKA2 and GUS1.

It catalyses the reaction L-seryl-[protein] + ATP = O-phospho-L-seryl-[protein] + ADP + H(+). The catalysed reaction is L-threonyl-[protein] + ATP = O-phospho-L-threonyl-[protein] + ADP + H(+). Probable serine/threonine-protein kinase that may be involved in ribosome biogenesis. The polypeptide is Probable serine/threonine-protein kinase RTK1 (RTK1) (Saccharomyces cerevisiae (strain ATCC 204508 / S288c) (Baker's yeast)).